Reading from the N-terminus, the 599-residue chain is NADH-ubiquinone oxidoreductase chain 5 (599 aa).

The next 16 membrane-spanning stretches (helical) occupy residues 1–21 (MLEL…IFLF), 28–48 (FAES…ILLM), 81–101 (CFFV…FYYM), 115–135 (GLFL…QLLI), 171–191 (GDIG…DWSF), 193–213 (GLYA…LAAA), 233–253 (TPVS…FLLI), 265–285 (IQLM…ICAL), 302–322 (LGLM…FLHI), 323–343 (CMHA…IHGL), 363–383 (SVCF…AGFF), 398–420 (NSWA…VRLL), 455–475 (VIAG…CLSL), 481–501 (LAAV…VNLL), 510–530 (IPEL…HKLI), and 577–597 (LIKM…GIMI).

This sequence belongs to the complex I subunit 5 family.

The protein localises to the mitochondrion inner membrane. It catalyses the reaction a ubiquinone + NADH + 5 H(+)(in) = a ubiquinol + NAD(+) + 4 H(+)(out). In terms of biological role, core subunit of the mitochondrial membrane respiratory chain NADH dehydrogenase (Complex I) that is believed to belong to the minimal assembly required for catalysis. Complex I functions in the transfer of electrons from NADH to the respiratory chain. The immediate electron acceptor for the enzyme is believed to be ubiquinone. The protein is NADH-ubiquinone oxidoreductase chain 5 (ND5) of Branchiostoma floridae (Florida lancelet).